An 88-amino-acid chain; its full sequence is U1-hexatoxin-Iw1d (88 aa).

Residues 1–17 (LKFVVLICLVIMASTSA) form the signal peptide. Glutamine 18 bears the Pyrrolidone carboxylic acid mark. Cystine bridges form between cysteine 20–cysteine 31, cysteine 25–cysteine 39, cysteine 30–cysteine 65, cysteine 49–cysteine 73, and cysteine 67–cysteine 80. Residues 86 to 88 (RSE) constitute a propeptide that is removed on maturation.

This sequence belongs to the MIT-like AcTx family. In terms of tissue distribution, expressed by the venom gland.

Its subcellular location is the secreted. This Illawarra wisharti (Illawarra funnel-web spider) protein is U1-hexatoxin-Iw1d.